Reading from the N-terminus, the 1051-residue chain is DNA-directed RNA polymerase subunit beta (1051 aa).

The protein belongs to the RNA polymerase beta chain family. In terms of assembly, in plastids the minimal PEP RNA polymerase catalytic core is composed of four subunits: alpha, beta, beta', and beta''. When a (nuclear-encoded) sigma factor is associated with the core the holoenzyme is formed, which can initiate transcription (Potential).

It localises to the plastid. Its subcellular location is the apicoplast. It catalyses the reaction RNA(n) + a ribonucleoside 5'-triphosphate = RNA(n+1) + diphosphate. Its function is as follows. DNA-dependent RNA polymerase catalyzes the transcription of DNA into RNA using the four ribonucleoside triphosphates as substrates. This chain is DNA-directed RNA polymerase subunit beta (rpoB), found in Toxoplasma gondii.